Reading from the N-terminus, the 228-residue chain is ATP-dependent dethiobiotin synthetase BioD (228 aa).

Aspartate 13–phenylalanine 18 is an ATP binding site. Mg(2+) is bound at residue threonine 17. The active site involves lysine 38. Serine 42 is a substrate binding site. ATP is bound by residues aspartate 55, glutamate 116–glycine 119, asparagine 179–lysine 180, and proline 208–isoleucine 210. Mg(2+) is bound by residues aspartate 55 and glutamate 116.

This sequence belongs to the dethiobiotin synthetase family. As to quaternary structure, homodimer. Mg(2+) serves as cofactor.

The protein resides in the cytoplasm. The catalysed reaction is (7R,8S)-7,8-diammoniononanoate + CO2 + ATP = (4R,5S)-dethiobiotin + ADP + phosphate + 3 H(+). It participates in cofactor biosynthesis; biotin biosynthesis; biotin from 7,8-diaminononanoate: step 1/2. Functionally, catalyzes a mechanistically unusual reaction, the ATP-dependent insertion of CO2 between the N7 and N8 nitrogen atoms of 7,8-diaminopelargonic acid (DAPA, also called 7,8-diammoniononanoate) to form a ureido ring. This is ATP-dependent dethiobiotin synthetase BioD from Clostridium perfringens (strain 13 / Type A).